The primary structure comprises 629 residues: FAST kinase domain-containing protein 4 (629 aa).

The 59-residue stretch at 559-617 folds into the RAP domain; that stretch reads IAFLRWEFPNFNSRSKDLLGRFVLARRHVLAAGFLVVDVPYYEWLDLKSEWQKTAYLKD.

Belongs to the FAST kinase family.

The protein resides in the mitochondrion matrix. Functionally, plays a role in processing of mitochondrial RNA precursors and in stabilization of a subset of mature mitochondrial RNA species, such as MT-CO1, MT-CO2, MT-CYB, MT-CO3, MT-ND3, MT-ND5 and MT-ATP8/6. May play a role in cell cycle progression. The protein is FAST kinase domain-containing protein 4 (Tbrg4) of Rattus norvegicus (Rat).